Here is a 298-residue protein sequence, read N- to C-terminus: Protease HtpX homolog (298 aa).

Helical transmembrane passes span 14-34 (VVLLVVFFALLALIGASAGYL) and 39-59 (YAMGLVLALVIGVIYATSMIF). Histidine 143 provides a ligand contact to Zn(2+). Glutamate 144 is an active-site residue. Residue histidine 147 coordinates Zn(2+). The next 2 membrane-spanning stretches (helical) occupy residues 158-178 (IAVALASAVTVISSIGGRMLW) and 197-217 (IITLLLSLLSLLLAPLVASLI). Residue glutamate 226 coordinates Zn(2+).

This sequence belongs to the peptidase M48B family. The cofactor is Zn(2+).

Its subcellular location is the cell membrane. This Streptococcus pyogenes serotype M1 protein is Protease HtpX homolog.